The following is a 73-amino-acid chain: Gene 30 protein (73 aa).

Positions 12 to 66 (LEKAINAVGGSQKVLAEKVGVTPQAINMLKKRGGSLPVTKMRKYEEVTGLPREVL) constitute an HTH cro/C1-type domain. The H-T-H motif DNA-binding region spans 23–42 (QKVLAEKVGVTPQAINMLKK).

This chain is Gene 30 protein (30), found in Escherichia coli (Bacteriophage phi-80).